Here is a 648-residue protein sequence, read N- to C-terminus: MTLNAESEALVGVSHPLDPLSRVEIARAVAILKEGPAAAESFRFISVELREPSKDDLRAGVAVAREADAVLVDRAQARSFEAVVDLEAGTVDSWKLLAENIQPPFMLDEFAECEDACRKDPEVIAALAKRGLTNLDLVCFEPWSVGYFGEDNEGRRLMRALVFVRDEADDSPYAHPIENFIVFYDLNAGKVVRLEDDQAIPVPSARGNYLPKYVGEARTDLKPLNITQPEGASFTVTGNHVTWADWSFRVGFTPREGLVLHQLKFKDQGVDRPVINRASLSEMVVPYGDTAPVQAKKNAFDSGEYNIGNMANSLTLGCDCLGEIKYFDGHSVDSHGNPWTIENAICMHEEDDSILWKHFDFREGTAETRRSRKLVISFIATVANYEYAFYWHLFLDGSIEFLVKATGILSTAGQLPGEKNPYGQSLNNDGLYAPIHQHMFNVRMDFELDGVKNAVYEVDMEYPEHNPTGTAFMAVDRLLETEQKAIRKTNEAKHRFWKIANHESKNLVNEPVAYRLIPTNGIQLAARDDAYVSKRAQFARNNLWVTAYDRTERFAAGEYPNQATGADDGLHIWTQKDRNIVDTDLVVWYTFGMHHVVRLEDWPVMPRQNIGFMLEPHGFFNQNPTLNLPTSTSTTQTGEADTCCHNGK.

The propeptide occupies 1 to 9 (MTLNAESEA). 299–310 (AFDSGEYNIGNM) lines the substrate pocket. The active-site Proton acceptor is the Asp301. Residues Cys320 and Cys346 are joined by a disulfide bond. 382 to 387 (VANYEY) contacts substrate. Tyr385 acts as the Schiff-base intermediate with substrate; via topaquinone in catalysis. Tyr385 is subject to 2',4',5'-topaquinone. Residues His436 and His438 each contribute to the Cu cation site. Positions 445, 446, and 584 each coordinate Mn(2+). His595 is a binding site for Cu cation.

Belongs to the copper/topaquinone oxidase family. In terms of assembly, homodimer. Cu cation serves as cofactor. The cofactor is Zn(2+). It depends on L-topaquinone as a cofactor. Requires Mn(2+) as cofactor. Topaquinone (TPQ) is generated by copper-dependent autoxidation of a specific tyrosyl residue.

The catalysed reaction is a primary methyl amine + O2 + H2O = an aldehyde + H2O2 + NH4(+). In terms of biological role, the exact function of MaoXI is not known. The protein is Primary amine oxidase (maoI) of Arthrobacter sp. (strain P1).